The chain runs to 351 residues: Ribosomal RNA large subunit methyltransferase M (351 aa).

Residues Ser-186, 219 to 222 (APGG), Asp-238, Asp-258, and Asp-274 contribute to the S-adenosyl-L-methionine site. Lys-303 acts as the Proton acceptor in catalysis.

It belongs to the class I-like SAM-binding methyltransferase superfamily. RNA methyltransferase RlmE family. RlmM subfamily. In terms of assembly, monomer.

Its subcellular location is the cytoplasm. It carries out the reaction cytidine(2498) in 23S rRNA + S-adenosyl-L-methionine = 2'-O-methylcytidine(2498) in 23S rRNA + S-adenosyl-L-homocysteine + H(+). Its function is as follows. Catalyzes the 2'-O-methylation at nucleotide C2498 in 23S rRNA. The protein is Ribosomal RNA large subunit methyltransferase M of Xylella fastidiosa (strain M23).